A 234-amino-acid polypeptide reads, in one-letter code: Lipoprotein-releasing system ATP-binding protein LolD (234 aa).

The ABC transporter domain maps to Ile-13–Leu-233. Ala-49–Ser-56 serves as a coordination point for ATP.

It belongs to the ABC transporter superfamily. Lipoprotein translocase (TC 3.A.1.125) family. As to quaternary structure, the complex is composed of two ATP-binding proteins (LolD) and two transmembrane proteins (LolC and LolE).

The protein localises to the cell inner membrane. Its function is as follows. Part of the ABC transporter complex LolCDE involved in the translocation of mature outer membrane-directed lipoproteins, from the inner membrane to the periplasmic chaperone, LolA. Responsible for the formation of the LolA-lipoprotein complex in an ATP-dependent manner. The sequence is that of Lipoprotein-releasing system ATP-binding protein LolD from Bradyrhizobium diazoefficiens (strain JCM 10833 / BCRC 13528 / IAM 13628 / NBRC 14792 / USDA 110).